Reading from the N-terminus, the 367-residue chain is Alanine racemase (367 aa).

Lys-40 (proton acceptor; specific for D-alanine) is an active-site residue. At Lys-40 the chain carries N6-(pyridoxal phosphate)lysine. Arg-136 provides a ligand contact to substrate. Residue Tyr-263 is the Proton acceptor; specific for L-alanine of the active site. Substrate is bound at residue Met-310.

The protein belongs to the alanine racemase family. It depends on pyridoxal 5'-phosphate as a cofactor.

The catalysed reaction is L-alanine = D-alanine. Its pathway is amino-acid biosynthesis; D-alanine biosynthesis; D-alanine from L-alanine: step 1/1. Its function is as follows. Catalyzes the interconversion of L-alanine and D-alanine. May also act on other amino acids. The polypeptide is Alanine racemase (alr) (Streptococcus pneumoniae serotype 19F (strain G54)).